A 346-amino-acid chain; its full sequence is Phosphoribosylformylglycinamidine cyclo-ligase (346 aa).

This sequence belongs to the AIR synthase family.

Its subcellular location is the cytoplasm. It catalyses the reaction 2-formamido-N(1)-(5-O-phospho-beta-D-ribosyl)acetamidine + ATP = 5-amino-1-(5-phospho-beta-D-ribosyl)imidazole + ADP + phosphate + H(+). It participates in purine metabolism; IMP biosynthesis via de novo pathway; 5-amino-1-(5-phospho-D-ribosyl)imidazole from N(2)-formyl-N(1)-(5-phospho-D-ribosyl)glycinamide: step 2/2. This is Phosphoribosylformylglycinamidine cyclo-ligase from Bacillus anthracis (strain A0248).